A 510-amino-acid chain; its full sequence is Ribonuclease Y (510 aa).

The helical transmembrane segment at 2 to 22 (IYIIFSSIFAGFILGFLVRVF) threads the bilayer. The 61-residue stretch at 198–258 (TVASVELPND…IRKELAKRTL (61 aa)) folds into the KH domain. Residues 324–419 (VLSHSKETAI…VQIADAISAS (96 aa)) form the HD domain.

It belongs to the RNase Y family.

The protein resides in the cell membrane. Endoribonuclease that initiates mRNA decay. The sequence is that of Ribonuclease Y from Borreliella burgdorferi (strain ATCC 35210 / DSM 4680 / CIP 102532 / B31) (Borrelia burgdorferi).